A 90-amino-acid polypeptide reads, in one-letter code: Barrier-to-autointegration factor-like protein (90 aa).

Belongs to the BAF family. As to quaternary structure, homodimer. Heterodimerizes with BANF1.

The protein resides in the nucleus. It is found in the cytoplasm. Its function is as follows. May play a role in BANF1 regulation and influence tissue-specific roles of BANF1. This chain is Barrier-to-autointegration factor-like protein (BANF2), found in Bos taurus (Bovine).